The sequence spans 110 residues: Phosphoribosyl-ATP pyrophosphatase (110 aa).

This sequence belongs to the PRA-PH family.

The protein localises to the cytoplasm. It catalyses the reaction 1-(5-phospho-beta-D-ribosyl)-ATP + H2O = 1-(5-phospho-beta-D-ribosyl)-5'-AMP + diphosphate + H(+). The protein operates within amino-acid biosynthesis; L-histidine biosynthesis; L-histidine from 5-phospho-alpha-D-ribose 1-diphosphate: step 2/9. The chain is Phosphoribosyl-ATP pyrophosphatase from Teredinibacter turnerae (strain ATCC 39867 / T7901).